The following is a 176-amino-acid chain: Large ribosomal subunit protein uL6 (176 aa).

Residues 153–170 are compositionally biased toward basic and acidic residues; that stretch reads PEPYKGKGIRYGDEEVRR. A disordered region spans residues 153 to 176; that stretch reads PEPYKGKGIRYGDEEVRRKEAKKK.

It belongs to the universal ribosomal protein uL6 family. In terms of assembly, part of the 50S ribosomal subunit.

In terms of biological role, this protein binds to the 23S rRNA, and is important in its secondary structure. It is located near the subunit interface in the base of the L7/L12 stalk, and near the tRNA binding site of the peptidyltransferase center. This chain is Large ribosomal subunit protein uL6, found in Chromohalobacter salexigens (strain ATCC BAA-138 / DSM 3043 / CIP 106854 / NCIMB 13768 / 1H11).